The primary structure comprises 83 residues: Hepcidin-2 (83 aa).

An N-terminal signal peptide occupies residues 1 to 26 (MALSTRTQAACLLLLLLASLSSTTYL). Residues 27–53 (QQQMRQTTELQPLHGEESRADIAIPMQ) constitute a propeptide that is removed on maturation. 4 disulfides stabilise this stretch: Cys65–Cys81, Cys68–Cys71, Cys69–Cys77, and Cys72–Cys80.

It belongs to the hepcidin family. Highly expressed in the liver and to a much lesser extent in the heart. Also expressed in pancreas.

The protein resides in the secreted. Seems to act as a signaling molecule involved in the maintenance of iron homeostasis. The sequence is that of Hepcidin-2 (Hamp2) from Mus musculus (Mouse).